We begin with the raw amino-acid sequence, 156 residues long: Large ribosomal subunit protein uL15 (156 aa).

A disordered region spans residues 14–35 (GSRTHGWGRVGQHRKSGSSGGK).

It belongs to the universal ribosomal protein uL15 family. In terms of assembly, part of the 50S ribosomal subunit.

Functionally, binds to the 23S rRNA. This is Large ribosomal subunit protein uL15 from Pyrobaculum islandicum (strain DSM 4184 / JCM 9189 / GEO3).